The following is a 227-amino-acid chain: Cytochrome c oxidase subunit 2 (227 aa).

At 1–14 (MAYPFQLGLQDATS) the chain is on the mitochondrial intermembrane side. Residues 15–45 (PIMEELTNFHDHTLMIVFLISTLVLYIISLM) traverse the membrane as a helical segment. Residues 46 to 59 (LTTKLTHTSTMDAQ) lie on the Mitochondrial matrix side of the membrane. The chain crosses the membrane as a helical span at residues 60 to 87 (EVETIWTILPAVILILIALPSLRILYMM). The Mitochondrial intermembrane segment spans residues 88 to 227 (DEINNPALTV…YFEDWSASMI (140 aa)). Cu cation is bound by residues His-161, Cys-196, Glu-198, Cys-200, His-204, and Met-207. Glu-198 lines the Mg(2+) pocket. Position 218 is a phosphotyrosine (Tyr-218).

It belongs to the cytochrome c oxidase subunit 2 family. In terms of assembly, component of the cytochrome c oxidase (complex IV, CIV), a multisubunit enzyme composed of 14 subunits. The complex is composed of a catalytic core of 3 subunits MT-CO1, MT-CO2 and MT-CO3, encoded in the mitochondrial DNA, and 11 supernumerary subunits COX4I, COX5A, COX5B, COX6A, COX6B, COX6C, COX7A, COX7B, COX7C, COX8 and NDUFA4, which are encoded in the nuclear genome. The complex exists as a monomer or a dimer and forms supercomplexes (SCs) in the inner mitochondrial membrane with NADH-ubiquinone oxidoreductase (complex I, CI) and ubiquinol-cytochrome c oxidoreductase (cytochrome b-c1 complex, complex III, CIII), resulting in different assemblies (supercomplex SCI(1)III(2)IV(1) and megacomplex MCI(2)III(2)IV(2)). Found in a complex with TMEM177, COA6, COX18, COX20, SCO1 and SCO2. Interacts with TMEM177 in a COX20-dependent manner. Interacts with COX20. Interacts with COX16. Cu cation is required as a cofactor.

It localises to the mitochondrion inner membrane. It carries out the reaction 4 Fe(II)-[cytochrome c] + O2 + 8 H(+)(in) = 4 Fe(III)-[cytochrome c] + 2 H2O + 4 H(+)(out). Functionally, component of the cytochrome c oxidase, the last enzyme in the mitochondrial electron transport chain which drives oxidative phosphorylation. The respiratory chain contains 3 multisubunit complexes succinate dehydrogenase (complex II, CII), ubiquinol-cytochrome c oxidoreductase (cytochrome b-c1 complex, complex III, CIII) and cytochrome c oxidase (complex IV, CIV), that cooperate to transfer electrons derived from NADH and succinate to molecular oxygen, creating an electrochemical gradient over the inner membrane that drives transmembrane transport and the ATP synthase. Cytochrome c oxidase is the component of the respiratory chain that catalyzes the reduction of oxygen to water. Electrons originating from reduced cytochrome c in the intermembrane space (IMS) are transferred via the dinuclear copper A center (CU(A)) of subunit 2 and heme A of subunit 1 to the active site in subunit 1, a binuclear center (BNC) formed by heme A3 and copper B (CU(B)). The BNC reduces molecular oxygen to 2 water molecules using 4 electrons from cytochrome c in the IMS and 4 protons from the mitochondrial matrix. In Hybomys univittatus (Peter's striped mouse), this protein is Cytochrome c oxidase subunit 2 (MT-CO2).